The chain runs to 1091 residues: Voltage-dependent calcium channel subunit alpha-2/delta-1 (1091 aa).

A signal peptide spans 1–24; that stretch reads MAAGCLLALTLTLFQSWLIGPSSE. The Extracellular segment spans residues 25–1061; it reads EPFPSPVTIK…VLEDYTDCGG (1037 aa). Asparagine 92 carries N-linked (GlcNAc...) asparagine glycosylation. Serine 119 is subject to Phosphoserine. Asparagine 136 and asparagine 184 each carry an N-linked (GlcNAc...) asparagine glycan. The VWFA domain maps to 252-429; sequence DMLILVDVSG…INTQEYLDVL (178 aa). A divalent metal cation-binding residues include aspartate 258, serine 260, and serine 262. An MIDAS-like motif motif is present at residues 258-262; sequence DVSGS. N-linked (GlcNAc...) asparagine glycosylation is found at asparagine 323 and asparagine 347. Cysteine 403 and cysteine 1047 are joined by a disulfide. The region spanning 445–536 is the Cache domain; that stretch reads WTNVYLDALE…QPKNPKSQEP (92 aa). Residues asparagine 593, asparagine 769, asparagine 876, and asparagine 973 are each glycosylated (N-linked (GlcNAc...) asparagine). The chain crosses the membrane as a helical span at residues 1062–1082; that stretch reads VSGLNPSLWSIFGLQFILLWL. The Cytoplasmic portion of the chain corresponds to 1083–1091; sequence VSGSRHYLW.

This sequence belongs to the calcium channel subunit alpha-2/delta family. In terms of assembly, dimer formed of alpha-2-1 and delta-1 chains; disulfide-linked. Voltage-dependent calcium channels are multisubunit complexes, consisting of alpha-1 (CACNA1), alpha-2 (CACNA2D), beta (CACNB) and delta (CACNA2D) subunits in a 1:1:1:1 ratio. Post-translationally, proteolytically processed into subunits alpha-2-1 and delta-1 that are disulfide-linked.

The protein resides in the membrane. It localises to the cell membrane. In terms of biological role, the alpha-2/delta subunit of voltage-dependent calcium channels regulates calcium current density and activation/inactivation kinetics of the calcium channel. Plays an important role in excitation-contraction coupling. The protein is Voltage-dependent calcium channel subunit alpha-2/delta-1 (Cacna2d1) of Rattus norvegicus (Rat).